Here is a 231-residue protein sequence, read N- to C-terminus: Cytochrome c oxidase subunit 2 (231 aa).

Residues 1 to 14 (MATPAQLGLQNATS) lie on the Mitochondrial intermembrane side of the membrane. A helical transmembrane segment spans residues 15–45 (PIMEELIAFHDHALMIIFLISSLVLYIISLM). The Mitochondrial matrix portion of the chain corresponds to 46 to 59 (LTTKLTHTSTMNAQ). A helical membrane pass occupies residues 60–87 (EIEMIWTILPAIILIMIALPSLRILYMT). The Mitochondrial intermembrane segment spans residues 88–231 (DEFNKPYLTL…WASYLYIVSL (144 aa)). The Cu cation site is built by His161, Cys196, Glu198, Cys200, His204, and Met207. Position 198 (Glu198) interacts with Mg(2+).

The protein belongs to the cytochrome c oxidase subunit 2 family. As to quaternary structure, component of the cytochrome c oxidase (complex IV, CIV), a multisubunit enzyme composed of 14 subunits. The complex is composed of a catalytic core of 3 subunits MT-CO1, MT-CO2 and MT-CO3, encoded in the mitochondrial DNA, and 11 supernumerary subunits COX4I, COX5A, COX5B, COX6A, COX6B, COX6C, COX7A, COX7B, COX7C, COX8 and NDUFA4, which are encoded in the nuclear genome. The complex exists as a monomer or a dimer and forms supercomplexes (SCs) in the inner mitochondrial membrane with NADH-ubiquinone oxidoreductase (complex I, CI) and ubiquinol-cytochrome c oxidoreductase (cytochrome b-c1 complex, complex III, CIII), resulting in different assemblies (supercomplex SCI(1)III(2)IV(1) and megacomplex MCI(2)III(2)IV(2)). Found in a complex with TMEM177, COA6, COX18, COX20, SCO1 and SCO2. Interacts with TMEM177 in a COX20-dependent manner. Interacts with COX20. Interacts with COX16. The cofactor is Cu cation.

It localises to the mitochondrion inner membrane. The enzyme catalyses 4 Fe(II)-[cytochrome c] + O2 + 8 H(+)(in) = 4 Fe(III)-[cytochrome c] + 2 H2O + 4 H(+)(out). Component of the cytochrome c oxidase, the last enzyme in the mitochondrial electron transport chain which drives oxidative phosphorylation. The respiratory chain contains 3 multisubunit complexes succinate dehydrogenase (complex II, CII), ubiquinol-cytochrome c oxidoreductase (cytochrome b-c1 complex, complex III, CIII) and cytochrome c oxidase (complex IV, CIV), that cooperate to transfer electrons derived from NADH and succinate to molecular oxygen, creating an electrochemical gradient over the inner membrane that drives transmembrane transport and the ATP synthase. Cytochrome c oxidase is the component of the respiratory chain that catalyzes the reduction of oxygen to water. Electrons originating from reduced cytochrome c in the intermembrane space (IMS) are transferred via the dinuclear copper A center (CU(A)) of subunit 2 and heme A of subunit 1 to the active site in subunit 1, a binuclear center (BNC) formed by heme A3 and copper B (CU(B)). The BNC reduces molecular oxygen to 2 water molecules using 4 electrons from cytochrome c in the IMS and 4 protons from the mitochondrial matrix. The sequence is that of Cytochrome c oxidase subunit 2 (MT-CO2) from Aotus nigriceps (Black-headed night monkey).